The sequence spans 450 residues: Sorting nexin-4 (450 aa).

At Met-1 the chain carries N-acetylmethionine. A disordered region spans residues 1–46 (MEQAPPDPERQLQPAPLEPLGSPDAGLGAAVGKEAEGAGEESSGVD). The residue at position 22 (Ser-22) is a Phosphoserine. Residues 61–187 (SVSEAEKRTG…YLFLTQEGNW (127 aa)) form the PX domain. 4 residues coordinate a 1,2-diacyl-sn-glycero-3-phospho-(1D-myo-inositol-3-phosphate): Arg-106, Ser-108, Lys-132, and Arg-154.

This sequence belongs to the sorting nexin family. In terms of assembly, heterodimer; heterodimerizes with SNX7 or SNX30. Interacts with WWC1/KIBRA. Identified in a complex with WWC1/KIBRA and dynein components DYNLL1 and DYNC1I2. Interacts with BIN1.

It is found in the early endosome membrane. Its function is as follows. Involved in the regulation of endocytosis and in several stages of intracellular trafficking. Plays a role in recycling endocytosed transferrin receptor and prevent its degradation. Involved in autophagosome assembly by regulating trafficking and recycling of phospholipid scramblase ATG9A. This Homo sapiens (Human) protein is Sorting nexin-4.